The chain runs to 628 residues: Biosynthetic arginine decarboxylase (628 aa).

N6-(pyridoxal phosphate)lysine is present on K99. 279–289 serves as a coordination point for substrate; sequence VDVGGGLGIDY.

Belongs to the Orn/Lys/Arg decarboxylase class-II family. SpeA subfamily. The cofactor is Mg(2+). Pyridoxal 5'-phosphate is required as a cofactor.

It carries out the reaction L-arginine + H(+) = agmatine + CO2. Catalyzes the biosynthesis of agmatine from arginine. The protein is Biosynthetic arginine decarboxylase of Xanthomonas campestris pv. campestris (strain ATCC 33913 / DSM 3586 / NCPPB 528 / LMG 568 / P 25).